Consider the following 227-residue polypeptide: Ribosomal RNA small subunit methyltransferase G (227 aa).

Residues Gly-74, Leu-79, 124–125 (AE), and Arg-142 contribute to the S-adenosyl-L-methionine site.

This sequence belongs to the methyltransferase superfamily. RNA methyltransferase RsmG family.

It localises to the cytoplasm. Specifically methylates the N7 position of guanine in position 518 of 16S rRNA. The polypeptide is Ribosomal RNA small subunit methyltransferase G (Mycolicibacterium vanbaalenii (strain DSM 7251 / JCM 13017 / BCRC 16820 / KCTC 9966 / NRRL B-24157 / PYR-1) (Mycobacterium vanbaalenii)).